Here is a 471-residue protein sequence, read N- to C-terminus: UDP-N-acetylmuramate--L-alanine ligase (471 aa).

114–120 lines the ATP pocket; the sequence is GTHGKTT.

It belongs to the MurCDEF family.

The protein resides in the cytoplasm. It carries out the reaction UDP-N-acetyl-alpha-D-muramate + L-alanine + ATP = UDP-N-acetyl-alpha-D-muramoyl-L-alanine + ADP + phosphate + H(+). The protein operates within cell wall biogenesis; peptidoglycan biosynthesis. Its function is as follows. Cell wall formation. In Rhizobium johnstonii (strain DSM 114642 / LMG 32736 / 3841) (Rhizobium leguminosarum bv. viciae), this protein is UDP-N-acetylmuramate--L-alanine ligase.